A 223-amino-acid polypeptide reads, in one-letter code: UPF0758 protein HD_0732 (223 aa).

The MPN domain maps to 98–220; the sequence is TINTPHLAIM…YFSFEEERFH (123 aa). Positions 169, 171, and 182 each coordinate Zn(2+). Positions 169–182 match the JAMM motif motif; that stretch reads HNHPSGNCTASQAD.

This sequence belongs to the UPF0758 family.

This is UPF0758 protein HD_0732 from Haemophilus ducreyi (strain 35000HP / ATCC 700724).